A 1037-amino-acid polypeptide reads, in one-letter code: Signal-induced proliferation-associated protein 1 (1037 aa).

The disordered stretch occupies residues 1 to 85 (MWAGGVGSPR…ASRPAATPTR (85 aa)). A Phosphothreonine modification is found at Thr-62. 4 positions are modified to phosphoserine: Ser-65, Ser-178, Ser-299, and Ser-309. One can recognise a Rap-GAP domain in the interval 316–534 (LLTLDEQVLS…RTRQQYLQDL (219 aa)). One can recognise a PDZ domain in the interval 682-758 (ELALPRDGQG…VCVTVLPPDE (77 aa)). Residues Ser-812 and Ser-834 each carry the phosphoserine modification. Disordered regions lie at residues 830 to 849 (HNSLSSGSSLSDEAPVLPNT) and 855 to 898 (LVTT…ASIL). Residues 871 to 881 (PPSQDQSGSPS) show a composition bias toward low complexity. Ser-907 is modified (phosphoserine). The segment at 943-969 (REGQPISESGDPKEALKCDSEPEPGSL) is disordered. Over residues 952 to 962 (GDPKEALKCDS) the composition is skewed to basic and acidic residues. A coiled-coil region spans residues 968-1025 (SLSEKVSHLESMLWKLQEDLQREKADRAALEEEVRSLRHNNQRLLAESESAATRLLLA).

In terms of assembly, interacts with RRP1B; the interaction leads to inhibition of SIPA1 GTPase activity. Preferentially expressed in both fetal and adult lymphohematopoietic tissues.

It is found in the nucleus. The protein localises to the cytoplasm. The protein resides in the perinuclear region. Its subcellular location is the endomembrane system. Functionally, GTPase activator for the nuclear Ras-related regulatory proteins Rap1, Rsr1 and Ran in vitro, converting them to the putatively inactive GDP-bound state. Affects cell cycle progression. This Mus musculus (Mouse) protein is Signal-induced proliferation-associated protein 1 (Sipa1).